Reading from the N-terminus, the 493-residue chain is MGWNGGLTSPSMEEHFYPFLIERRPSYMEEDEEEHEDEDLSLVLEKKDKDLLLAAELGKALLERNDQLMKAKDALEEELRETLETIEQEKHDMRLKMEVQESEWRAQVADLESDLAEARLQMQQLLSEQRECGRESASAAQELSEQNQRLVEQLAQASQVEQALNMELKSLREENRDLTISRGQFAPCLQSLRSENVLLLENKKEMESQTKQLQDENDNVQNQLISAKEGIFHLQRQKKDAELQVQQLQLEAQKLRDSQRTLQLQVKELQEELHMRDSQFSTHFSLHSEIQQSTAGQDHEMTTEAFPGLPCLPPSPYNLQKMGRNSVETQSITSDYMDTYLTEREGDLLRDSEEETIRLQDKVTMQHVELTTLQEEVQRLQDLLQQNNLDSIAKQAVLDRDEALMKKGELEQELARCQMEKESLNLQLLSTIQQKVMLSQELEAWQDDMQIVINQQLQSQKQQETQKVPETPQNSFMRRDSKQGRIFSFFKNI.

Coiled-coil stretches lie at residues 56-275 and 365-431; these read ELGK…ELHM and MQHV…LLST.

The protein belongs to the BICDR family.

The protein is BICD family-like cargo adapter 2 (bicdl2) of Xenopus laevis (African clawed frog).